Consider the following 124-residue polypeptide: uncharacterized protein (124 aa).

The protein localises to the cytoplasm. Its subcellular location is the nucleus. This is an uncharacterized protein from Schizosaccharomyces pombe (strain 972 / ATCC 24843) (Fission yeast).